The sequence spans 526 residues: MAVFPNSCLAGCLLIFILLQLPKLDSAPFDVIGPQEPILAVVGEDAELPCRLSPNVSAKGMELRWFREKVSPAVFVSREGQEQEGEEMAEYRGRVSLVEDHIAEGSVAVRIQEVKASDDGEYRCFFRQDENYEEAIVHLKVAALGSDPHISMKVQESGEIQLECTSVGWYPEPQVQWRTHRGEEFPSMSESRNPDEEGLFTVRASVIIRDSSMKNVSCCIRNLLLGQEKEVEVSIPASFFPRLTPWMVAVAVILVVLGLLTIGSIFFTWRLYKERSRQRRNEFSSKEKLLEELKWKRATLHAVDVTLDPDTAHPHLFLYEDSKSVRLEDSRQKLPEKPERFDSWPCVMGREAFTSGRHYWEVEVGDRTDWAIGVCRENVMKKGFDPMTPENGFWAVELYGNGYWALTPLRTPLPLAGPPRRVGVFLDYESGDIFFYNMTDGSHIYTFSKASFSGPLRPFFCLWSCGKKPLTICPVTDGLEGVMVVADAKDISKEIPLSPMGEDSASGDIETLHSKLIPLQPSQGVP.

Residues 1–26 (MAVFPNSCLAGCLLIFILLQLPKLDS) form the signal peptide. Ig-like V-type domains lie at 27-140 (APFD…VHLK) and 148-234 (PHIS…VEVS). At 27-242 (APFDVIGPQE…VSIPASFFPR (216 aa)) the chain is on the extracellular side. 2 disulfide bridges follow: C50-C124 and C164-C218. N-linked (GlcNAc...) (complex) asparagine glycosylation occurs at N55. The N-linked (GlcNAc...) (hybrid) asparagine glycan is linked to N215. The chain crosses the membrane as a helical span at residues 243 to 269 (LTPWMVAVAVILVVLGLLTIGSIFFTW). Residues 270-526 (RLYKERSRQR…IPLQPSQGVP (257 aa)) lie on the Cytoplasmic side of the membrane. The B30.2/SPRY domain maps to 285 to 479 (SKEKLLEELK…LTICPVTDGL (195 aa)).

Belongs to the immunoglobulin superfamily. BTN/MOG family. Seems to associate with xanthine dehydrogenase/oxidase. As to expression, expressed in mammary tissue.

The protein localises to the membrane. Functionally, may function in the secretion of milk-fat droplets. May act as a specific membrane-associated receptor for the association of cytoplasmic droplets with the apical plasma membrane. Inhibits the proliferation of CD4 and CD8 T-cells activated by anti-CD3 antibodies, T-cell metabolism and IL2 and IFNG secretion. This chain is Butyrophilin subfamily 1 member A1 (BTN1A1), found in Bos taurus (Bovine).